The primary structure comprises 500 residues: Probable malate:quinone oxidoreductase (500 aa).

It belongs to the MQO family. The cofactor is FAD.

It carries out the reaction (S)-malate + a quinone = a quinol + oxaloacetate. It participates in carbohydrate metabolism; tricarboxylic acid cycle; oxaloacetate from (S)-malate (quinone route): step 1/1. In Bacillus cereus (strain ZK / E33L), this protein is Probable malate:quinone oxidoreductase.